Here is a 133-residue protein sequence, read N- to C-terminus: MSSNSVVYWGTGRRKTSVARVRLVPGNGTITINGRPGDNYLNYNPAYIAAVKAPLETLGLSTEYDVLVNVHGGGLTGQSGAIKQGAARALCELSADNRKPLKTEGHLSRDPRAKERRKYGLKKARKAPQFSKR.

Basic and acidic residues predominate over residues 98 to 113 (RKPLKTEGHLSRDPRA). The segment at 98-133 (RKPLKTEGHLSRDPRAKERRKYGLKKARKAPQFSKR) is disordered. The span at 114-133 (KERRKYGLKKARKAPQFSKR) shows a compositional bias: basic residues.

Belongs to the universal ribosomal protein uS9 family.

The chain is Small ribosomal subunit protein uS9 from Synechococcus sp. (strain CC9902).